We begin with the raw amino-acid sequence, 446 residues long: tRNA-2-methylthio-N(6)-dimethylallyladenosine synthase (446 aa).

Positions 3-124 (KKLYIKTYGC…LPELISKVVR (122 aa)) constitute an MTTase N-terminal domain. Cys-12, Cys-48, Cys-87, Cys-162, Cys-166, and Cys-169 together coordinate [4Fe-4S] cluster. Positions 148 to 380 (YPQGASAFIS…QKELSSQQLA (233 aa)) constitute a Radical SAM core domain. A TRAM domain is found at 383 to 446 (ESCVGSTMKV…SNSLTGEIYT (64 aa)).

Belongs to the methylthiotransferase family. MiaB subfamily. In terms of assembly, monomer. [4Fe-4S] cluster is required as a cofactor.

It is found in the cytoplasm. It carries out the reaction N(6)-dimethylallyladenosine(37) in tRNA + (sulfur carrier)-SH + AH2 + 2 S-adenosyl-L-methionine = 2-methylsulfanyl-N(6)-dimethylallyladenosine(37) in tRNA + (sulfur carrier)-H + 5'-deoxyadenosine + L-methionine + A + S-adenosyl-L-homocysteine + 2 H(+). Its function is as follows. Catalyzes the methylthiolation of N6-(dimethylallyl)adenosine (i(6)A), leading to the formation of 2-methylthio-N6-(dimethylallyl)adenosine (ms(2)i(6)A) at position 37 in tRNAs that read codons beginning with uridine. The polypeptide is tRNA-2-methylthio-N(6)-dimethylallyladenosine synthase (Rickettsia canadensis (strain McKiel)).